Consider the following 550-residue polypeptide: Medium-chain acyl-CoA ligase Mig (550 aa).

The signal sequence occupies residues 1 to 19 (MSDTTTAFTVPAVAKAVAA).

This sequence belongs to the ATP-dependent AMP-binding enzyme family.

Its subcellular location is the secreted. It localises to the cell wall. It catalyses the reaction a medium-chain fatty acid + ATP + CoA = a medium-chain fatty acyl-CoA + AMP + diphosphate. The enzyme catalyses hexanoate + ATP + CoA = hexanoyl-CoA + AMP + diphosphate. The catalysed reaction is heptanoate + ATP + CoA = heptanoyl-CoA + AMP + diphosphate. It carries out the reaction octanoate + ATP + CoA = octanoyl-CoA + AMP + diphosphate. It catalyses the reaction decanoate + ATP + CoA = decanoyl-CoA + AMP + diphosphate. The enzyme catalyses dodecanoate + ATP + CoA = dodecanoyl-CoA + AMP + diphosphate. The catalysed reaction is tetradecanoate + ATP + CoA = tetradecanoyl-CoA + AMP + diphosphate. It carries out the reaction (9Z)-octadecenoate + ATP + CoA = (9Z)-octadecenoyl-CoA + AMP + diphosphate. It catalyses the reaction (9Z,12Z,15Z)-octadecatrienoate + ATP + CoA = (9Z,12Z,15Z)-octadecatrienoyl-CoA + AMP + diphosphate. The enzyme catalyses (5Z,8Z,11Z,14Z)-eicosatetraenoate + ATP + CoA = (5Z,8Z,11Z,14Z)-eicosatetraenoyl-CoA + AMP + diphosphate. It participates in lipid metabolism; fatty acid metabolism. With respect to regulation, inhibited by 2-hydroxydodecanoic acid, a typical inhibitor of medium-chain acyl-CoA synthetases. Functionally, catalyzes the activation of medium-chain fatty acids as acyl-coenzyme A (acyl-CoA). Shows maximal activity with saturated fatty acids of medium-chain length between C6 and C12. Has lower activity with tridecanoic acid (C13), tetradecanoic acid (C14) and with unsaturated fatty acids like oleic acid (C18:1), linolenic acid (C18:3) and arachidonic acid (C20:4). Shows weak activity with some aromatic carbon acids. Involved in the metabolism of fatty acid during mycobacterial survival in macrophages. This Mycobacterium avium protein is Medium-chain acyl-CoA ligase Mig.